Reading from the N-terminus, the 255-residue chain is 1-(5-phosphoribosyl)-5-[(5-phosphoribosylamino)methylideneamino] imidazole-4-carboxamide isomerase (255 aa).

Aspartate 8 serves as the catalytic Proton acceptor. Residue aspartate 129 is the Proton donor of the active site.

It belongs to the HisA/HisF family.

The protein localises to the cytoplasm. It carries out the reaction 1-(5-phospho-beta-D-ribosyl)-5-[(5-phospho-beta-D-ribosylamino)methylideneamino]imidazole-4-carboxamide = 5-[(5-phospho-1-deoxy-D-ribulos-1-ylimino)methylamino]-1-(5-phospho-beta-D-ribosyl)imidazole-4-carboxamide. The protein operates within amino-acid biosynthesis; L-histidine biosynthesis; L-histidine from 5-phospho-alpha-D-ribose 1-diphosphate: step 4/9. The protein is 1-(5-phosphoribosyl)-5-[(5-phosphoribosylamino)methylideneamino] imidazole-4-carboxamide isomerase of Prochlorococcus marinus subsp. pastoris (strain CCMP1986 / NIES-2087 / MED4).